Reading from the N-terminus, the 520-residue chain is BBSome complex member BBS4 (520 aa).

The disordered stretch occupies residues 1-26 (MAEVKLGMKTQVPASVESQKPRSKKA). A required for localization to centrosomes region spans residues 1-66 (MAEVKLGMKT…EQLQETQGLC (66 aa)). TPR repeat units lie at residues 67-100 (EYAI…SPQC), 102-134 (DNLK…NQKD), 135-167 (WEIC…LNKH), 168-201 (DLTY…SPEN), 203-235 (ELLT…DPAN), 237-269 (KAIL…IPES), 270-303 (PPLW…APFD), 304-337 (WKIL…QPKM), 339-371 (ELYM…DKCN), and 373-408 (LVNL…LKDN). The tract at residues 101 to 337 (ADNLKQVARS…SAAINFQPKM (237 aa)) is interaction with PCM1. Residues 338-520 (GELYMLLAVA…TEASEQKKEK (183 aa)) form a required for localization to centrosomes region. The tract at residues 488–520 (AQLPKPPSLPLEPEPEPTVEASPTEASEQKKEK) is disordered.

It belongs to the BBS4 family. Part of BBSome complex, that contains BBS1, BBS2, BBS4, BBS5, BBS7, BBS8/TTC8, BBS9 and BBIP10. Interacts with PCM1 and DCTN1. Interacts with DC28B. Interacts with ALDOB and C2CD3. Interacts with PKD1. Interacts with CEP290. Interacts with DLEC1. In terms of tissue distribution, expressed in the hippocampus and dentate gyrus, the columnar epithelial cells of bronchioles, the olfactory epithelium and the inner segment and outer nuclear layer of the retina. Expressed in testis.

Its subcellular location is the cytoplasm. The protein resides in the cytoskeleton. The protein localises to the microtubule organizing center. It is found in the centrosome. It localises to the cell projection. Its subcellular location is the cilium membrane. The protein resides in the centriolar satellite. The protein localises to the cilium. It is found in the flagellum. Its function is as follows. The BBSome complex is thought to function as a coat complex required for sorting of specific membrane proteins to the primary cilia. The BBSome complex is required for ciliogenesis but is dispensable for centriolar satellite function. This ciliogenic function is mediated in part by the Rab8 GDP/GTP exchange factor, which localizes to the basal body and contacts the BBSome. Rab8(GTP) enters the primary cilium and promotes extension of the ciliary membrane. Firstly the BBSome associates with the ciliary membrane and binds to RAB3IP/Rabin8, the guanosyl exchange factor (GEF) for Rab8 and then the Rab8-GTP localizes to the cilium and promotes docking and fusion of carrier vesicles to the base of the ciliary membrane. The BBSome complex, together with the LTZL1, controls SMO ciliary trafficking and contributes to the sonic hedgehog (SHH) pathway regulation. Required for proper BBSome complex assembly and its ciliary localization. Required for microtubule anchoring at the centrosome but not for microtubule nucleation. May be required for the dynein-mediated transport of pericentriolar proteins to the centrosome. The chain is BBSome complex member BBS4 (Bbs4) from Mus musculus (Mouse).